The chain runs to 1282 residues: Myosin-1 (1282 aa).

The interval Met1–Val30 is disordered. One can recognise a Myosin motor domain in the interval Ala44–Asp723. ATP is bound at residue Gly137–Thr144. Ser365 is modified (phosphoserine). Residues Val412–Ala494 are actin-binding. Positions Leu569–Asp590 are disordered. IQ domains follow at residues His727 to Cys747 and Ala748 to Gln773. In terms of domain architecture, TH1 spans Arg781–Ala977. Residues Ser973–Glu1073 are disordered. A compositionally biased stretch (low complexity) spans Pro1029 to Ala1058. Positions Pro1059–Ala1068 are enriched in pro residues. In terms of domain architecture, SH3 spans Pro1074–Gln1135. Residues Ala1237–Arg1282 are disordered. Low complexity predominate over residues Gly1252–Gly1269.

It belongs to the TRAFAC class myosin-kinesin ATPase superfamily. Myosin family. In terms of processing, phosphorylation of the TEDS site (Ser-365) is required for the polarization of the actin cytoskeleton. Phosphorylation probably activates the myosin-I ATPase activity.

The protein localises to the cytoplasm. It is found in the cytoskeleton. It localises to the actin patch. In terms of biological role, type-I myosin implicated in the organization of the actin cytoskeleton. Required for proper actin cytoskeleton polarization. At the cell cortex, assembles in patch-like structures together with proteins from the actin-polymerizing machinery and promotes actin assembly. Functions as actin nucleation-promoting factor (NPF) for the Arp2/3 complex. This is Myosin-1 (myo1) from Mycosarcoma maydis (Corn smut fungus).